Here is a 1026-residue protein sequence, read N- to C-terminus: Multidrug resistance protein MdtC (1026 aa).

A run of 11 helical transmembrane segments spans residues 15–35 (ILIA…LPVA), 333–353 (EVEE…FLFL), 360–380 (LIPA…MYLC), 387–407 (LSLM…IVVL), 431–451 (VGFT…PLLL), 463–483 (FAVT…TLTP), 528–548 (LVGV…IAIP), 853–873 (LILI…LYES), 897–917 (LFNA…IGIV), 953–973 (PIMM…LSDG), and 984–1004 (ITIV…TPVV).

Belongs to the resistance-nodulation-cell division (RND) (TC 2.A.6) family. MdtC subfamily. As to quaternary structure, part of a tripartite efflux system composed of MdtA, MdtB and MdtC. MdtC forms a heteromultimer with MdtB.

It localises to the cell inner membrane. The chain is Multidrug resistance protein MdtC from Salmonella paratyphi B (strain ATCC BAA-1250 / SPB7).